The sequence spans 539 residues: MKPYIGAIDQGTSSTRFILFDKNGDIVLSHQILLTQHHPHPGWVEHDGNEILESVNKCIQVVMKQYYENNFGTKEDIKAIGITNQRETTIVWDKKTSKPLNNAIVWCDTRTKDLVNYFNNKAKKLIDDNNIIDNNSKSTTVVDGAQGECKLESKNYLREKCGLPLSSYFSGLKLKWLFDNCESVREAYGRGDCLMGTIDSWLVWNLTGGKCHITDVTNASRTMLMNLKTLSWDKELCDFLEVPIEILPNIHSSSEIYGHVTMGDDEQQQQQHPLHGIPIAGVLGDQQAAMVGQMCFEKGQAKNTYGTGCFLLYNTGNDIVHSRNGLLTTVCYQFGKDSPPIYALEGGVAVAGSGVRWLIDNMGIAESSQEIEDLAKSVQDTGGMYFVPAFSGLFAPYWRDDARGVMVGLTHHTNRCHIARSVLESTCLQTFEVLDAMQKDSGNKLVELRVDGGMAKNNLLLQIQSDLLGLPVVKPISLETTCFGAAFAAGIATGVWKETMQFKIGGKFTPQLDENHKTQKLKEWKKAISKSLDWIDTKN.

Residue Thr12 coordinates substrate. Residue Arg16 coordinates ATP. The substrate site is built by Arg86, Tyr168, and Asp285. ATP contacts are provided by residues Thr307, Gly352, and 453 to 457 (GMAKN).

It belongs to the FGGY kinase family.

It carries out the reaction glycerol + ATP = sn-glycerol 3-phosphate + ADP + H(+). The protein operates within polyol metabolism; glycerol degradation via glycerol kinase pathway; sn-glycerol 3-phosphate from glycerol: step 1/1. The polypeptide is Probable glycerol kinase (gk) (Dictyostelium discoideum (Social amoeba)).